The following is an 82-amino-acid chain: U-actitoxin-Avd3l (82 aa).

A signal peptide spans 1–16; the sequence is MVFLLCFFLVADVSYG. A BPTI/Kunitz inhibitor domain is found at 21 to 71; sequence CLLPMDVGRCRARFPRYYYNSSSRRCEKFNYGGCGGNANNFHTLEECEKVC. Disulfide bonds link Cys21–Cys71, Cys30–Cys54, and Cys46–Cys67. Positions 76–82 are excised as a propeptide; it reads RDSPKEN.

This sequence belongs to the venom Kunitz-type family. Sea anemone type 2 potassium channel toxin subfamily.

It is found in the secreted. The protein resides in the nematocyst. Dual-function toxin that inhibits both the serine protease trypsin and voltage-gated potassium channels Kv1.2/KCNA2. The polypeptide is U-actitoxin-Avd3l (Anemonia viridis (Snakelocks anemone)).